Reading from the N-terminus, the 290-residue chain is Formamidopyrimidine-DNA glycosylase (290 aa).

The active-site Schiff-base intermediate with DNA is the proline 2. Glutamate 3 functions as the Proton donor in the catalytic mechanism. The Proton donor; for beta-elimination activity role is filled by lysine 58. The DNA site is built by histidine 98, arginine 126, and arginine 171. The FPG-type zinc finger occupies 256–290 (FVYDRAGLPCRVCATPVRQIVQGQRSTFYCPKCQH). The active-site Proton donor; for delta-elimination activity is the arginine 280.

It belongs to the FPG family. In terms of assembly, monomer. Requires Zn(2+) as cofactor.

It catalyses the reaction Hydrolysis of DNA containing ring-opened 7-methylguanine residues, releasing 2,6-diamino-4-hydroxy-5-(N-methyl)formamidopyrimidine.. It carries out the reaction 2'-deoxyribonucleotide-(2'-deoxyribose 5'-phosphate)-2'-deoxyribonucleotide-DNA = a 3'-end 2'-deoxyribonucleotide-(2,3-dehydro-2,3-deoxyribose 5'-phosphate)-DNA + a 5'-end 5'-phospho-2'-deoxyribonucleoside-DNA + H(+). Functionally, involved in base excision repair of DNA damaged by oxidation or by mutagenic agents. Acts as a DNA glycosylase that recognizes and removes damaged bases. Has a preference for oxidized purines, such as 7,8-dihydro-8-oxoguanine (8-oxoG). Has AP (apurinic/apyrimidinic) lyase activity and introduces nicks in the DNA strand. Cleaves the DNA backbone by beta-delta elimination to generate a single-strand break at the site of the removed base with both 3'- and 5'-phosphates. This Cupriavidus taiwanensis (strain DSM 17343 / BCRC 17206 / CCUG 44338 / CIP 107171 / LMG 19424 / R1) (Ralstonia taiwanensis (strain LMG 19424)) protein is Formamidopyrimidine-DNA glycosylase.